Consider the following 204-residue polypeptide: Holliday junction branch migration complex subunit RuvA (204 aa).

The domain I stretch occupies residues methionine 1–serine 64. The tract at residues histidine 65 to lysine 143 is domain II. The interval serine 144–leucine 155 is flexible linker. The segment at aspartate 156–leucine 204 is domain III.

This sequence belongs to the RuvA family. As to quaternary structure, homotetramer. Forms an RuvA(8)-RuvB(12)-Holliday junction (HJ) complex. HJ DNA is sandwiched between 2 RuvA tetramers; dsDNA enters through RuvA and exits via RuvB. An RuvB hexamer assembles on each DNA strand where it exits the tetramer. Each RuvB hexamer is contacted by two RuvA subunits (via domain III) on 2 adjacent RuvB subunits; this complex drives branch migration. In the full resolvosome a probable DNA-RuvA(4)-RuvB(12)-RuvC(2) complex forms which resolves the HJ.

It is found in the cytoplasm. In terms of biological role, the RuvA-RuvB-RuvC complex processes Holliday junction (HJ) DNA during genetic recombination and DNA repair, while the RuvA-RuvB complex plays an important role in the rescue of blocked DNA replication forks via replication fork reversal (RFR). RuvA specifically binds to HJ cruciform DNA, conferring on it an open structure. The RuvB hexamer acts as an ATP-dependent pump, pulling dsDNA into and through the RuvAB complex. HJ branch migration allows RuvC to scan DNA until it finds its consensus sequence, where it cleaves and resolves the cruciform DNA. The chain is Holliday junction branch migration complex subunit RuvA from Histophilus somni (strain 2336) (Haemophilus somnus).